A 961-amino-acid chain; its full sequence is Cytochrome b5-like reductase apf12 (961 aa).

FAD is bound at residue A298. The FAD-binding FR-type domain occupies 429–548; that stretch reads ARPQVDAFAW…IKPAPHFRIA (120 aa). NADP(+)-binding positions include 453–456, 499–500, and G753; these read SRIQ and SK. One can recognise a Cytochrome b5 heme-binding domain in the interval 716–793; it reads LNQITKLELA…LNEMVIGRLD (78 aa). 753 to 755 lines the FAD pocket; it reads GGE.

Belongs to the flavoprotein pyridine nucleotide cytochrome reductase family. It depends on FAD as a cofactor.

The protein operates within secondary metabolite biosynthesis. Its function is as follows. Cytochrome b5-like reductase; part of the gene cluster that mediates the biosynthesis of the cyclic tetrapeptide apicidin F (APF). The non-ribosomal peptide synthetase apf1 incorporates four different amino acids to produce apicidin F: L-phenylalanine, D-pipecolic acid (D-pip), N-methoxy-L-tryptophan and L-2-aminooctanedioic acid. L-Phenylalanine is the only proteinogenic amino acid directly used by apf1. The 3 other apf1 substrates are non-proteinogenic and have to be modified by other enzymes of the cluster. Lysine is converted to delta-1-pyrroline-5-carboxylate (P5C) which is reduced to L-pipecolic acid (L-pip) by apf3. L-pip is epimerized to D-pip, probably by apf1 activity, prior to incorporation. L-Tryptophan is N-oxidyzed by one of the cytochrome P450 monooxygenases (apf7 or apf8), and further methylated at the hydroxy group by the O-methyltransferase apf6 to yield N-methoxy-L-tryptophan. The synthesis of the fourth apf1 substrate is more complex. The fatty acid synthase apf5 is involved in the synthesis of the octanoic acid backbone of L-2-aminooctanedioic acid by fixing one acetyl-CoA unit and three malonyl-CoA units. Then one of the cytochrome P450 monooxygenases (apf7 or apf8) may oxidize this backbone to 2-oxooctanoic acid. The aminotransferase apf4 is predicted to catalyze the exchange of the keto group with an amino group. The next step would be the oxidation of 2-aminooctanoic acid by one of the cytochrome P450 monooxygenases (apf7 or apf8). The last step is the oxidation of 2-amino-8-hydroxyoctanoic acid to 2-aminooctanedioic acid is catalyzed by the FAD-dependent monooxygenase apf9. The polypeptide is Cytochrome b5-like reductase apf12 (Gibberella fujikuroi (strain CBS 195.34 / IMI 58289 / NRRL A-6831) (Bakanae and foot rot disease fungus)).